The sequence spans 263 residues: Pyridoxine 5'-phosphate synthase (263 aa).

Asn15 contacts 3-amino-2-oxopropyl phosphate. 17–18 (DH) contacts 1-deoxy-D-xylulose 5-phosphate. 3-amino-2-oxopropyl phosphate is bound at residue Arg26. The active-site Proton acceptor is the His51. 1-deoxy-D-xylulose 5-phosphate is bound by residues Arg53 and His58. The active-site Proton acceptor is the Glu78. Thr108 is a binding site for 1-deoxy-D-xylulose 5-phosphate. His199 serves as the catalytic Proton donor. 3-amino-2-oxopropyl phosphate contacts are provided by residues Gly200 and 221 to 222 (GH).

The protein belongs to the PNP synthase family. Homooctamer; tetramer of dimers.

The protein resides in the cytoplasm. It carries out the reaction 3-amino-2-oxopropyl phosphate + 1-deoxy-D-xylulose 5-phosphate = pyridoxine 5'-phosphate + phosphate + 2 H2O + H(+). Its pathway is cofactor biosynthesis; pyridoxine 5'-phosphate biosynthesis; pyridoxine 5'-phosphate from D-erythrose 4-phosphate: step 5/5. Catalyzes the complicated ring closure reaction between the two acyclic compounds 1-deoxy-D-xylulose-5-phosphate (DXP) and 3-amino-2-oxopropyl phosphate (1-amino-acetone-3-phosphate or AAP) to form pyridoxine 5'-phosphate (PNP) and inorganic phosphate. The polypeptide is Pyridoxine 5'-phosphate synthase (Ralstonia nicotianae (strain ATCC BAA-1114 / GMI1000) (Ralstonia solanacearum)).